We begin with the raw amino-acid sequence, 442 residues long: D-serine dehydratase (442 aa).

Lys118 is subject to N6-(pyridoxal phosphate)lysine.

The protein belongs to the serine/threonine dehydratase family. DsdA subfamily. In terms of assembly, monomer. Pyridoxal 5'-phosphate serves as cofactor.

It catalyses the reaction D-serine = pyruvate + NH4(+). The chain is D-serine dehydratase from Escherichia coli (strain 55989 / EAEC).